The sequence spans 344 residues: Anamorsin homolog 1 (344 aa).

The interval 1–169 (MANNVGVLLA…DTGSVFQIRK (169 aa)) is N-terminal SAM-like domain. A linker region spans residues 170-233 (KVSNQNGNFR…EDDLLTEEDL (64 aa)). The [2Fe-2S] cluster site is built by Cys244, Cys251, Cys254, and Cys256. Residues 244–256 (CAPTKKACKNCTC) are fe-S binding site A. Cys282, Cys285, Cys293, and Cys296 together coordinate [4Fe-4S] cluster. Short sequence motifs (cx2C motif) lie at residues 282-285 (CGSC) and 293-296 (CAGC). The interval 282 to 296 (CGSCGLGDAFRCAGC) is fe-S binding site B.

The protein belongs to the anamorsin family. In terms of assembly, monomer. It depends on [2Fe-2S] cluster as a cofactor. Requires [4Fe-4S] cluster as cofactor.

It is found in the cytoplasm. Its subcellular location is the mitochondrion intermembrane space. Component of the cytosolic iron-sulfur (Fe-S) protein assembly (CIA) machinery. Required for the maturation of extramitochondrial Fe-S proteins. Part of an electron transfer chain functioning in an early step of cytosolic Fe-S biogenesis, facilitating the de novo assembly of a [4Fe-4S] cluster on the cytosolic Fe-S scaffold complex. Electrons are transferred from NADPH via a FAD- and FMN-containing diflavin oxidoreductase. Together with the diflavin oxidoreductase, also required for the assembly of the diferric tyrosyl radical cofactor of ribonucleotide reductase (RNR), probably by providing electrons for reduction during radical cofactor maturation in the catalytic small subunit. The protein is Anamorsin homolog 1 of Physcomitrium patens (Spreading-leaved earth moss).